Here is a 307-residue protein sequence, read N- to C-terminus: Beta-lactamase (307 aa).

The segment at residues 1-34 (MRNRGFGRRELLVAMAMLVSVTGCARHASGARPA) is a signal peptide (tat-type signal). S84 acts as the Acyl-ester intermediate in catalysis. Substrate is bound at residue S142. The active-site Proton acceptor is the E182. 251 to 253 (TGT) is a substrate binding site.

This sequence belongs to the class-A beta-lactamase family. As to quaternary structure, monomer. In terms of processing, exported by the Tat system. The position of the signal peptide cleavage has not been experimentally proven.

The protein localises to the periplasm. It localises to the secreted. It carries out the reaction a beta-lactam + H2O = a substituted beta-amino acid. Its activity is regulated as follows. Is inhibited by clavulanate. In terms of biological role, extended spectrum beta-lactamase (ESBL) that inactivates beta-lactam antibiotics by hydrolyzing the amide group of the beta-lactam ring. Displays high levels of penicillinase and cephalosporinase activity as well as measurable activity with carbapenems, including imipenem and meropenem. Plays a primary role in the intrinsic resistance of mycobacteria to beta-lactam antibiotics. The sequence is that of Beta-lactamase (blaC) from Mycobacterium bovis (strain ATCC BAA-935 / AF2122/97).